We begin with the raw amino-acid sequence, 302 residues long: Sulfate adenylyltransferase subunit 2 (302 aa).

The disordered stretch occupies residues 280-302 (RQGRLIDSDQSASMEQKKRQGYF).

Belongs to the PAPS reductase family. CysD subfamily. As to quaternary structure, heterodimer composed of CysD, the smaller subunit, and CysN.

It catalyses the reaction sulfate + ATP + H(+) = adenosine 5'-phosphosulfate + diphosphate. It functions in the pathway sulfur metabolism; hydrogen sulfide biosynthesis; sulfite from sulfate: step 1/3. Functionally, with CysN forms the ATP sulfurylase (ATPS) that catalyzes the adenylation of sulfate producing adenosine 5'-phosphosulfate (APS) and diphosphate, the first enzymatic step in sulfur assimilation pathway. APS synthesis involves the formation of a high-energy phosphoric-sulfuric acid anhydride bond driven by GTP hydrolysis by CysN coupled to ATP hydrolysis by CysD. This chain is Sulfate adenylyltransferase subunit 2, found in Shewanella oneidensis (strain ATCC 700550 / JCM 31522 / CIP 106686 / LMG 19005 / NCIMB 14063 / MR-1).